The chain runs to 237 residues: MALTTWFWVGAVGMLAGTVLPIRDCIRHPSHRRYDLVLAGITGLAAIAYTTMGLGITATTVGDRTVYLARYIDWLVTTPLIVLYLAMLARPGHRTSAWLLAADVFVIAAGIAAALTTGVQRWLFFAVGAAGYAALLYGLLGTLPRALGDDPRVRSLFVTLRNITVVLWTLYPVVWLLSPAGIGILQTEMYTIVVVYLDFISKVAFVAFAVLGADAVSRLVAADAAAPATAEPTPDGD.

Residues 1 to 2 (MA) lie on the Extracellular side of the membrane. A helical transmembrane segment spans residues 3-23 (LTTWFWVGAVGMLAGTVLPIR). The Cytoplasmic portion of the chain corresponds to 24–31 (DCIRHPSH). A helical membrane pass occupies residues 32 to 53 (RRYDLVLAGITGLAAIAYTTMG). Topologically, residues 54-67 (LGITATTVGDRTVY) are extracellular. Residues 68 to 89 (LARYIDWLVTTPLIVLYLAMLA) traverse the membrane as a helical segment. Over 90-92 (RPG) the chain is Cytoplasmic. The helical transmembrane segment at 93–115 (HRTSAWLLAADVFVIAAGIAAAL) threads the bilayer. Topologically, residues 116–119 (TTGV) are extracellular. A helical transmembrane segment spans residues 120–147 (QRWLFFAVGAAGYAALLYGLLGTLPRAL). At 148 to 150 (GDD) the chain is on the cytoplasmic side. The helical transmembrane segment at 151-178 (PRVRSLFVTLRNITVVLWTLYPVVWLLS) threads the bilayer. Residues 179 to 186 (PAGIGILQ) lie on the Extracellular side of the membrane. A helical membrane pass occupies residues 187 to 214 (TEMYTIVVVYLDFISKVAFVAFAVLGAD). Lysine 202 carries the N6-(retinylidene)lysine modification. At 215-237 (AVSRLVAADAAAPATAEPTPDGD) the chain is on the cytoplasmic side.

Belongs to the archaeal/bacterial/fungal opsin family. As to quaternary structure, interacts with HTR-II.

The protein resides in the cell membrane. In terms of biological role, photophobic photoreceptor responsible for the negative phototaxis. Activates the sensory rhodopsin II transducer (HTR-II) in response to blue light. The chain is Sensory rhodopsin-2 (sop2) from Halobacterium salinarum (strain ATCC 700922 / JCM 11081 / NRC-1) (Halobacterium halobium).